Reading from the N-terminus, the 481-residue chain is Cysteine protease atg-4.1 (481 aa).

The active-site Nucleophile is Cys112. Active-site residues include Asp313 and His315. The segment at 462-481 is disordered; that stretch reads DVHTEEEDADEDNDDDVANA.

The protein belongs to the peptidase C54 family.

The protein localises to the cytoplasm. The catalysed reaction is [protein]-C-terminal L-amino acid-glycyl-phosphatidylethanolamide + H2O = [protein]-C-terminal L-amino acid-glycine + a 1,2-diacyl-sn-glycero-3-phosphoethanolamine. Cysteine protease required for autophagy. Cleaves the C-terminal amino acid of ATG8 family proteins lgg-1, to reveal a C-terminal glycine. Exposure of the glycine at the C-terminus is essential for ATG8 proteins conjugation to phosphatidylethanolamine (PE) and insertion to membranes, which is necessary for autophagy. Its cleavage activity is functionally redundant to atg-4.2, but it cleaves lgg-1 precursors more efficiently than atg-4.2. Acts redundantly with atg-4.2 to promote the lgg-1 delipidation to release the protein from membranes, which facilitates multiple events during macroautophagy. Unlike atg-4.2 does not seem to be required for autophagosome maturation. This Caenorhabditis elegans protein is Cysteine protease atg-4.1.